The primary structure comprises 431 residues: Enolase (431 aa).

Glutamine 166 contributes to the (2R)-2-phosphoglycerate binding site. The active-site Proton donor is the glutamate 208. Residues aspartate 245, glutamate 288, and aspartate 315 each contribute to the Mg(2+) site. (2R)-2-phosphoglycerate-binding residues include lysine 340, arginine 369, serine 370, and lysine 391. Lysine 340 serves as the catalytic Proton acceptor.

Belongs to the enolase family. It depends on Mg(2+) as a cofactor.

Its subcellular location is the cytoplasm. It localises to the secreted. The protein resides in the cell surface. The enzyme catalyses (2R)-2-phosphoglycerate = phosphoenolpyruvate + H2O. It functions in the pathway carbohydrate degradation; glycolysis; pyruvate from D-glyceraldehyde 3-phosphate: step 4/5. Functionally, catalyzes the reversible conversion of 2-phosphoglycerate (2-PG) into phosphoenolpyruvate (PEP). It is essential for the degradation of carbohydrates via glycolysis. This Clostridium botulinum (strain Okra / Type B1) protein is Enolase.